A 233-amino-acid polypeptide reads, in one-letter code: 5'-methylthioadenosine/S-adenosylhomocysteine nucleosidase (233 aa).

Residue E12 is the Proton acceptor of the active site. Substrate is bound by residues G78, I156, and 177-178; that span reads ME. The active-site Proton donor is the D201.

Belongs to the PNP/UDP phosphorylase family. MtnN subfamily.

The enzyme catalyses S-adenosyl-L-homocysteine + H2O = S-(5-deoxy-D-ribos-5-yl)-L-homocysteine + adenine. It carries out the reaction S-methyl-5'-thioadenosine + H2O = 5-(methylsulfanyl)-D-ribose + adenine. It catalyses the reaction 5'-deoxyadenosine + H2O = 5-deoxy-D-ribose + adenine. It participates in amino-acid biosynthesis; L-methionine biosynthesis via salvage pathway; S-methyl-5-thio-alpha-D-ribose 1-phosphate from S-methyl-5'-thioadenosine (hydrolase route): step 1/2. Its function is as follows. Catalyzes the irreversible cleavage of the glycosidic bond in both 5'-methylthioadenosine (MTA) and S-adenosylhomocysteine (SAH/AdoHcy) to adenine and the corresponding thioribose, 5'-methylthioribose and S-ribosylhomocysteine, respectively. Also cleaves 5'-deoxyadenosine, a toxic by-product of radical S-adenosylmethionine (SAM) enzymes, into 5-deoxyribose and adenine. The chain is 5'-methylthioadenosine/S-adenosylhomocysteine nucleosidase from Listeria monocytogenes serotype 4b (strain CLIP80459).